We begin with the raw amino-acid sequence, 290 residues long: Pyridoxal kinase PdxY (290 aa).

Residues serine 12 and 47–48 (TQ) contribute to the substrate site. ATP is bound by residues aspartate 114, glutamate 151, lysine 184, and 211–214 (RPLL). Residue aspartate 225 coordinates substrate.

The protein belongs to the pyridoxine kinase family. PdxY subfamily. As to quaternary structure, homodimer. It depends on Mg(2+) as a cofactor.

The catalysed reaction is pyridoxal + ATP = pyridoxal 5'-phosphate + ADP + H(+). The protein operates within cofactor metabolism; pyridoxal 5'-phosphate salvage; pyridoxal 5'-phosphate from pyridoxal: step 1/1. Pyridoxal kinase involved in the salvage pathway of pyridoxal 5'-phosphate (PLP). Catalyzes the phosphorylation of pyridoxal to PLP. This Pseudomonas fluorescens (strain ATCC BAA-477 / NRRL B-23932 / Pf-5) protein is Pyridoxal kinase PdxY.